Reading from the N-terminus, the 567-residue chain is DNA ligase (567 aa).

ATP is bound at residue Glu-260. Residue Lys-262 is the N6-AMP-lysine intermediate of the active site. Residues Arg-267, Arg-282, Glu-312, Phe-352, Arg-427, and Lys-433 each contribute to the ATP site.

It belongs to the ATP-dependent DNA ligase family. It depends on Mg(2+) as a cofactor.

The enzyme catalyses ATP + (deoxyribonucleotide)n-3'-hydroxyl + 5'-phospho-(deoxyribonucleotide)m = (deoxyribonucleotide)n+m + AMP + diphosphate.. In terms of biological role, DNA ligase that seals nicks in double-stranded DNA during DNA replication, DNA recombination and DNA repair. The chain is DNA ligase from Methanococcoides burtonii (strain DSM 6242 / NBRC 107633 / OCM 468 / ACE-M).